The following is a 461-amino-acid chain: ATP synthase subunit beta (461 aa).

151–158 (GGAGVGKT) lines the ATP pocket.

Belongs to the ATPase alpha/beta chains family. As to quaternary structure, F-type ATPases have 2 components, CF(1) - the catalytic core - and CF(0) - the membrane proton channel. CF(1) has five subunits: alpha(3), beta(3), gamma(1), delta(1), epsilon(1). CF(0) has three main subunits: a(1), b(2) and c(9-12). The alpha and beta chains form an alternating ring which encloses part of the gamma chain. CF(1) is attached to CF(0) by a central stalk formed by the gamma and epsilon chains, while a peripheral stalk is formed by the delta and b chains.

Its subcellular location is the cell inner membrane. It carries out the reaction ATP + H2O + 4 H(+)(in) = ADP + phosphate + 5 H(+)(out). In terms of biological role, produces ATP from ADP in the presence of a proton gradient across the membrane. The catalytic sites are hosted primarily by the beta subunits. The chain is ATP synthase subunit beta from Colwellia psychrerythraea (strain 34H / ATCC BAA-681) (Vibrio psychroerythus).